A 314-amino-acid polypeptide reads, in one-letter code: MPRRSTIALATAGALASTGTAYLGARNLLVGQATHARTVIPKSFDAPPRADGVYTRGGGPVQRWRREVPFDVHLMIFGDSTATGYGCASAEEVPGVLIARGLAEQTGKRIRLSTKAIVGATSKGVCGQVDAMFVVGPPPDAAVIMIGANDITALNGIGPSAQRLADCVRRLRTRGAVVVVGTCPDLGVITAIPQPLRALAHTRGVRLARAQTAAVKAAGGVPVPLGHLLAPKFRAMPELMFSADRYHPSAPAYALAADLLFLALRDALTEKLDIPIHETPSRPGTATLEPGHTRHSMMSRLRRPRPARAVPTGG.

Positions Met1–Ala21 are cleaved as a signal peptide. Ser80 acts as the Nucleophile in catalysis. The active-site Proton donor is the Asp244. His247 serves as the catalytic Proton acceptor. A disordered region spans residues Ile276–Gly314. Positions Thr293–Pro306 are enriched in basic residues.

The protein belongs to the 'GDSL' lipolytic enzyme family.

It carries out the reaction an acetyl ester + H2O = an aliphatic alcohol + acetate + H(+). The enzyme catalyses a butanoate ester + H2O = an aliphatic alcohol + butanoate + H(+). The catalysed reaction is triacetin + H2O = diacetylglycerol + acetate + H(+). It catalyses the reaction 1,2,3-tributanoylglycerol + H2O = dibutanoylglycerol + butanoate + H(+). Esterase activity is significantly inhibited by the serine modifier phenylmethylsulfonyl fluoride (PMSF). Completely inhibited by diethyl pyrocarbonate. Esterase that preferentially hydrolyzes short-chain fatty acids, particularly pNP-acetate (C2) and pNP-butyrate (C4). Also has weak activity with pNP-hexanoate (C6) and pNP-octanoate (C8). It can also hydrolyze short-chain tryglycerides such as triacetin and tributyrin. Important for intracellular survival. The polypeptide is GDSL-like esterase Rv1075c (Mycobacterium tuberculosis (strain ATCC 25618 / H37Rv)).